Consider the following 294-residue polypeptide: 4-hydroxy-tetrahydrodipicolinate synthase (294 aa).

Thr44 serves as a coordination point for pyruvate. Tyr132 functions as the Proton donor/acceptor in the catalytic mechanism. Lys160 (schiff-base intermediate with substrate) is an active-site residue. A pyruvate-binding site is contributed by Val202.

Belongs to the DapA family. As to quaternary structure, homotetramer; dimer of dimers.

The protein resides in the cytoplasm. It carries out the reaction L-aspartate 4-semialdehyde + pyruvate = (2S,4S)-4-hydroxy-2,3,4,5-tetrahydrodipicolinate + H2O + H(+). It participates in amino-acid biosynthesis; L-lysine biosynthesis via DAP pathway; (S)-tetrahydrodipicolinate from L-aspartate: step 3/4. Catalyzes the condensation of (S)-aspartate-beta-semialdehyde [(S)-ASA] and pyruvate to 4-hydroxy-tetrahydrodipicolinate (HTPA). This chain is 4-hydroxy-tetrahydrodipicolinate synthase, found in Leptospira biflexa serovar Patoc (strain Patoc 1 / Ames).